A 104-amino-acid polypeptide reads, in one-letter code: Urease subunit beta (104 aa).

It belongs to the urease beta subunit family. Heterotrimer of UreA (gamma), UreB (beta) and UreC (alpha) subunits. Three heterotrimers associate to form the active enzyme.

The protein resides in the cytoplasm. It catalyses the reaction urea + 2 H2O + H(+) = hydrogencarbonate + 2 NH4(+). It participates in nitrogen metabolism; urea degradation; CO(2) and NH(3) from urea (urease route): step 1/1. The protein is Urease subunit beta of Rhodococcus jostii (strain RHA1).